The primary structure comprises 695 residues: Elongation factor G 2 (695 aa).

The tr-type G domain maps to 5 to 280 (SKYRNIGIFA…AVVDYLPSPT (276 aa)). Residues 14-21 (AHVDAGKT), 78-82 (DTPGH), and 132-135 (NKLD) each bind GTP.

The protein belongs to the TRAFAC class translation factor GTPase superfamily. Classic translation factor GTPase family. EF-G/EF-2 subfamily.

The protein resides in the cytoplasm. Its function is as follows. Catalyzes the GTP-dependent ribosomal translocation step during translation elongation. During this step, the ribosome changes from the pre-translocational (PRE) to the post-translocational (POST) state as the newly formed A-site-bound peptidyl-tRNA and P-site-bound deacylated tRNA move to the P and E sites, respectively. Catalyzes the coordinated movement of the two tRNA molecules, the mRNA and conformational changes in the ribosome. This is Elongation factor G 2 from Photobacterium profundum (strain SS9).